The sequence spans 373 residues: Putative F-box protein At1g76830 (373 aa).

Positions 4-49 constitute an F-box domain; that stretch reads ITSFENLPEELKREILLRMSPNSLVTCSRVSKKLASMIRTKSFKEL.

This Arabidopsis thaliana (Mouse-ear cress) protein is Putative F-box protein At1g76830.